Here is a 155-residue protein sequence, read N- to C-terminus: Large ribosomal subunit protein eL24 (155 aa).

The segment covering 97–129 (KPEIRKAKRDEKAKADKEKKKADKAARKADKAK) has biased composition (basic and acidic residues). Residues 97–155 (KPEIRKAKRDEKAKADKEKKKADKAARKADKAKSAATQASKISKQQAKGAFQKVAATSR) form a disordered region. Polar residues predominate over residues 133–142 (TQASKISKQQ).

Belongs to the eukaryotic ribosomal protein eL24 family.

This Eremothecium gossypii (strain ATCC 10895 / CBS 109.51 / FGSC 9923 / NRRL Y-1056) (Yeast) protein is Large ribosomal subunit protein eL24 (RPL24).